A 123-amino-acid polypeptide reads, in one-letter code: Transmembrane protein 049L (123 aa).

2 helical membrane passes run 67 to 87 (VFGA…LWLV) and 104 to 121 (LSLQ…GVYN).

Its subcellular location is the membrane. The protein is Transmembrane protein 049L of Acheta domesticus (House cricket).